Reading from the N-terminus, the 370-residue chain is DNA primase large subunit PriL (370 aa).

Residues Cys-230, Cys-301, Cys-310, and Cys-317 each contribute to the [4Fe-4S] cluster site. The interval 337 to 370 (EGEEAQGKEQGKEKDDGKEKENGKESEVKKKKEK) is disordered.

It belongs to the eukaryotic-type primase large subunit family. Heterodimer of a small subunit (PriS) and a large subunit (PriL). The cofactor is [4Fe-4S] cluster.

Its function is as follows. Regulatory subunit of DNA primase, an RNA polymerase that catalyzes the synthesis of short RNA molecules used as primers for DNA polymerase during DNA replication. Stabilizes and modulates the activity of the small subunit, increasing the rate of DNA synthesis, and conferring RNA synthesis capability. The DNA polymerase activity may enable DNA primase to also catalyze primer extension after primer synthesis. May also play a role in DNA repair. The polypeptide is DNA primase large subunit PriL (Methanosarcina mazei (strain ATCC BAA-159 / DSM 3647 / Goe1 / Go1 / JCM 11833 / OCM 88) (Methanosarcina frisia)).